The sequence spans 493 residues: 3-octaprenyl-4-hydroxybenzoate carboxy-lyase (493 aa).

Position 177 (Asn177) interacts with Mn(2+). Residues 180-182 (IYR), 194-196 (RWL), and 199-200 (RG) each bind prenylated FMN. Residue Glu243 participates in Mn(2+) binding. Asp292 (proton donor) is an active-site residue.

It belongs to the UbiD family. Homohexamer. Prenylated FMN is required as a cofactor. The cofactor is Mn(2+).

The protein localises to the cell membrane. The enzyme catalyses a 4-hydroxy-3-(all-trans-polyprenyl)benzoate + H(+) = a 2-(all-trans-polyprenyl)phenol + CO2. It functions in the pathway cofactor biosynthesis; ubiquinone biosynthesis. Functionally, catalyzes the decarboxylation of 3-octaprenyl-4-hydroxy benzoate to 2-octaprenylphenol, an intermediate step in ubiquinone biosynthesis. The protein is 3-octaprenyl-4-hydroxybenzoate carboxy-lyase of Colwellia psychrerythraea (strain 34H / ATCC BAA-681) (Vibrio psychroerythus).